The following is a 214-amino-acid chain: cAMP-activated global transcriptional regulator Vfr (214 aa).

Residues 59–60, 73–75, 87–88, 132–133, arginine 179, and arginine 185 contribute to the 3',5'-cyclic AMP site; these read RE, GEL, RS, and TT. The 73-residue stretch at 142 to 214 folds into the HTH crp-type domain; it reads LDVTGRVART…GKTMVVFGTR (73 aa). Positions 174–193 form a DNA-binding region, H-T-H motif; it reads RQEIGRIVGCSREMVGRVLK.

In terms of assembly, homodimer.

In terms of biological role, global cAMP-dependent transcriptional regulator that controls virulence gene expression by distinct cAMP-dependent and -independent mechanisms, which allow to fine tune its virulence program in response to specific host cues or environments. Controls the expression of many regulatory targets including type II, type III and type IV secretion systems, flagellar-mediated motility, and quorum sensing systems. Transcriptional control is exerted by binding to a well-characterized consensus site (5'-ANWWTGNGAWNYAGWTCACAT) within target promoters. Directly binds to the toxA upstream region to regulate exotoxin A production, to the lasR gene promoter to activate the las quorum-sensing system or to the exsA promoter to regulate type III secretion system. Autoregulates as well its own expression. The chain is cAMP-activated global transcriptional regulator Vfr (vfr) from Pseudomonas aeruginosa (strain ATCC 15692 / DSM 22644 / CIP 104116 / JCM 14847 / LMG 12228 / 1C / PRS 101 / PAO1).